The primary structure comprises 145 residues: Chaperonin GroEL (145 aa).

It belongs to the chaperonin (HSP60) family. As to quaternary structure, forms a cylinder of 14 subunits composed of two heptameric rings stacked back-to-back. Interacts with the co-chaperonin GroES.

The protein resides in the cytoplasm. It catalyses the reaction ATP + H2O + a folded polypeptide = ADP + phosphate + an unfolded polypeptide.. In terms of biological role, together with its co-chaperonin GroES, plays an essential role in assisting protein folding. The GroEL-GroES system forms a nano-cage that allows encapsulation of the non-native substrate proteins and provides a physical environment optimized to promote and accelerate protein folding. In Thermus thermophilus, this protein is Chaperonin GroEL.